The following is a 96-amino-acid chain: Glutamyl-tRNA(Gln) amidotransferase subunit C (96 aa).

The protein belongs to the GatC family. Heterotrimer of A, B and C subunits.

It carries out the reaction L-glutamyl-tRNA(Gln) + L-glutamine + ATP + H2O = L-glutaminyl-tRNA(Gln) + L-glutamate + ADP + phosphate + H(+). The catalysed reaction is L-aspartyl-tRNA(Asn) + L-glutamine + ATP + H2O = L-asparaginyl-tRNA(Asn) + L-glutamate + ADP + phosphate + 2 H(+). In terms of biological role, allows the formation of correctly charged Asn-tRNA(Asn) or Gln-tRNA(Gln) through the transamidation of misacylated Asp-tRNA(Asn) or Glu-tRNA(Gln) in organisms which lack either or both of asparaginyl-tRNA or glutaminyl-tRNA synthetases. The reaction takes place in the presence of glutamine and ATP through an activated phospho-Asp-tRNA(Asn) or phospho-Glu-tRNA(Gln). The protein is Glutamyl-tRNA(Gln) amidotransferase subunit C of Halalkalibacterium halodurans (strain ATCC BAA-125 / DSM 18197 / FERM 7344 / JCM 9153 / C-125) (Bacillus halodurans).